A 332-amino-acid chain; its full sequence is MKVTFEQLKAAFNRVLISRGVDSETADACAEMFARTTESGVYSHGVNRFPRFIQQLENGDIIPDAQPKRITSLGAIEQWDAQRSIGNLTAKKMMDRAIELAADHGIGLVALRNANHWMRGGSYGWQAAEKGYIGICWTNSIAVMPPWGAKECRIGTNPLIVAIPSTPITMVDMSMSMFSYGMLEVNRLAGRQLPVDGGFDDEGNLTKEPGVIEKNRRILPMGYWKGSGMSLVLDMIATLLSDGASVAEVTEDNSDEYGISQIFIAIEVDKLIDGPTRDAKLQRIMDYVTSAERADENQAIRLPGHEFTTLLAENRRNGITVDDSVWAKIQAL.

Catalysis depends on H44, which acts as the Proton donor. NAD(+) contacts are provided by residues 168-174, 224-225, and 304-306; these read ITMVDMS, WK, and GHE.

Belongs to the LDH2/MDH2 oxidoreductase family. DlgD subfamily. In terms of assembly, homodimer.

Its subcellular location is the cytoplasm. The enzyme catalyses 3-dehydro-L-gulonate + NAD(+) = 2,3-dioxo-L-gulonate + NADH + H(+). The catalysed reaction is 3-dehydro-L-gulonate + NADP(+) = 2,3-dioxo-L-gulonate + NADPH + H(+). In terms of biological role, catalyzes the reduction of 2,3-diketo-L-gulonate in the presence of NADH, to form 3-keto-L-gulonate. This chain is 2,3-diketo-L-gulonate reductase, found in Escherichia coli O6:K15:H31 (strain 536 / UPEC).